A 3432-amino-acid polypeptide reads, in one-letter code: MTKKPGGPGKNRAINMLKRGLPRVFPLVGVKRVVMSLLDGRGPVRFVLALITFFKFTALAPTKALLGRWKAVEKSVAMKHLTSFKRELGTLIDAVNKRGRKQNKRGGNEGSIMWLASLAVVIACAGAMKLSNFQGKLLMTINNTDIADVIVIPTSKGENRCWVRAIDVGYMCEDTITYECPKLTMGNDPEDVDCWCDNQEVYVQYGRCTRTRHSKRSRRSVSVQTHGESSLVNKKEAWLDSTKATRYLMKTENWIIRNPGYAFLAAVLGWMLGSNNGQRVVFTILLLLVAPAYSFNCLGMGNRDFIEGASGATWVDLVLEGDSCLTIMANDKPTLDVRMINIEASQLAEVRSYCYHASVTDISTVARCPTTGEAHNEKRADSSYVCKQGFTDRGWGNGCGLFGKGSIDTCAKFSCTSKAIGRTIQPENIKYEVGIFVHGTTTSENHGNYSAQVGASQAAKFTVTPNAPSITLKLGDYGEVTLDCEPRSGLNTEAFYVMTVGSKSFLVHREWFHDLALPWTSPSSTAWRNRELLMEFEGAHATKQSVVALGSQEGGLHQALAGAIVVEYSSSVKLTSGHLKCRLKMDKLALKGTTYGMCTEKFSFAKNPADTGHGTVVIELSYSGSDGSCKIPIVSVASLNDMTPVGRLVTVNPFVATSSANSKVLVEMEPPFGDSYIVVGRGDKQINHHWHKAGSTLGKAFSTTLKGAQRLAALGDTAWDFGSIGGVFNSIGKAVHQVFGGAFRTLFGGMSWITQGLMGALLLWMGVNARDRSIALAFLATGGVLVFLATNVHADTGCAIDITRKEMRCGSGIFVHNDVEAWVDRYKYLPETPRSLAKIVHKAHKEGVCGVRSVTRLEHQMWEAVRDELNVLLKENAVDLSVVVNKPVGRYRSAPKRLSMTQEKFEMGWKAWGKSILFAPELANSTFVVDGPETKECPDEHRAWNSMQIEDFGFGITSTRVWLKIREESTDECDGAIIGTAVKGHVAVHSDLSYWIESRYNDTWKLERAVFGEVKSCTWPETHTLWGDDVEESELIIPHTIAGPKSKHNRREGYKTQNQGPWDENGIVLDFDYCPGTKVTITEDCGKRGPSVRTTTDSGKLITDWCCRSCSLPPLRFRTENGCWYGMEIRPVRHDETTLVRSQVDAFNGEMVDPFQLGLLVMFLATQEVLRKRWTARLTIPAVLGALLVLMLGGITYTDLARYVVLVAAAFAEANSGGDVLHLALIAVFKIQPAFLVMNMLSTRWTNQENVVLVLGAAFFQLASVDLQIGVHGILNAAAIAWMIVRAITFPTTSSVTMPVLALLTPGMRALYLDTYRIILLVIGICSLLHERKKTMAKKKGAVLLGLALTSTGWFSPTTIAAGLMVCNPNKKRGWPATEFLSAVGLMFAIVGGLAELDIESMSIPFMLAGLMAVSYVVSGKATDMWLERAADISWEMDAAITGSSRRLDVKLDDDGDFHLIDDPGVPWKVWVLRMSCIGLAALTPWAIVPAAFGYWLTLKTTKRGGVFWDTPSPKPCSKGDTTTGVYRIMARGILGTYQAGVGVMYENVFHTLWHTTRGAAIMSGEGKLTPYWGSVREDRIAYGGPWRFDRKWNGTDDVQVIVVEPGKAAVNIQTKPGVFRTPFGEVGAVSLDYPRGTSGSPILDSNGDIIGLYGNGVELGDGSYVSAIVQGDRQEEPVPEAYTPNMLRKRQMTVLDLHPGSGKTRKILPQIIKDAIQQRLRTAVLAPTRVVAAEMAEVLRGLPVRYQTSAVQREHQGNEIVDVMCHATLTHRLMSPNRVPNYNLFVMDEAHFTDPASIAARGYIATKVELGEAAAIFMTATPPGTTDPFPDSNAPIHDLQDEIPDRAWSSGYEWITEYAGKTVWFVASVKMGNEIAMCLQRAGKKVIQLNRKSYDTEYPKCKNGDWDFVITTDISEMGANFGASRVIDCRKSVKPTILEEGEGRVILGNPSPITSASAAQRRGRVGRNPNQVGDEYHYGGATSEDDSNLAHWTEAKIMLDNIHMPNGLVAQLYGPEREKAFTMDGEYRLRGEEKKNFLELLRTADLPVWLAYKVASNGIQYTDRKWCFDGPRTNAILEDNTEVEIVTRMGERKILKPRWLDARVYADHQALKWFKDFAAGKRSAVSFIEVLGRMPEHFMGKTREALDTMYLVATAEKGGKAHRMALEELPDALETITLIVAITVMTGGFFLLMMQRKGIGKMGLGALVLTLATFFLWAAEVPGTKIAGTLLIALLLMVVLIPEPEKQRSQTDNQLAVFLICVLTVVGVVAANEYGMLEKTKADLKSMFGGKTQASGLTGLPSMALDLRPATAWALYGGSTVVLTPLLKHLITSEYVTTSLASINSQAGSLFVLPRGVPFTDLDLTVGLVFLGCWGQITLTTFLTAMVLATLHYGYMLPGWQAEALRAAQRRTAAGIMKNAVVDGMVATDVPELERTTPLMQKKVGQVLLIGVSVAAFLVNPNVTTVREAGVLVTAATLTLWDNGASAVWNSTTATGLCHVMRGSYLAGGSIAWTLIKNADKPSLKRGRPGGRTLGEQWKEKLNAMSREEFFKYRREAIIEVDRTEARRARRENNIVGGHPVSRGSAKLRWLVEKGFVSPIGKVIDLGCGRGGWSYYAATLKKVQEVRGYTKGGAGHEEPMLMQSYGWNLVSLKSGVDVFYKPSEPSDTLFCDIGESSPSPEVEEQRTLRVLEMTSDWLHRGPREFCIKVLCPYMPKVIEKMEVLQRRFGGGLVRLPLSRNSNHEMYWVSGAAGNVVHAVNMTSQVLLGRMDRTVWRGPKYEEDVNLGSGTRAVGKGEVHSNQEKIKKRIQKLKEEFATTWHKDPEHPYRTWTYHGSYEVKATGSASSLVNGVVKLMSKPWDAIANVTTMAMTDTTPFGQQRVFKEKVDTKAPEPPAGAKEVLNETTNWLWAHLSREKRPRLCTKEEFIKKVNSNAALGAVFAEQNQWSTAREAVDDPRFWEMVDEERENHLRGECHTCIYNMMGKREKKPGEFGKAKGSRAIWFMWLGARYLEFEALGFLNEDHWLSRENSGGGVEGSGVQKLGYILRDIAGKQGGKMYADDTAGWDTRITRTDLENEAKVLELLDGEHRMLARAIIELTYRHKVVKVMRPAAEGKTVMDVISREDQRGSGQVVTYALNTFTNIAVQLVRLMEAEGVIGPQHLEQLPRKNKIAVRTWLFENGEERVTRMAISGDDCVVKPLDDRFATALHFLNAMSKVRKDIQEWKPSHGWHDWQQVPFCSNHFQEIVMKDGRSIVVPCRGQDELIDRARISPGAGWNVKDTACLAKAYAQMWLLLYFHRRDLRLMANAICSAVPVDWVPTGRTSWSIHSKGEWMTTEDMLQVWNRVWIEENEWMMDKTPITSWTDVPYVGKREDIWCGSLIGTRSRATWAENIYAAINQVRAVIGKENYVDYMTSLRRYEDVLIQEDRVI.

An interaction with host EXOC1 region spans residues 2-15 (TKKPGGPGKNRAIN). The Cytoplasmic segment spans residues 2-109 (TKKPGGPGKN…RKQNKRGGNE (108 aa)). Residues 37 to 72 (LLDGRGPVRFVLALITFFKFTALAPTKALLGRWKAV) are hydrophobic; homodimerization of capsid protein C. The propeptide at 106–127 (GGNEGSIMWLASLAVVIACAGA) is ER anchor for the capsid protein C, removed in mature form by serine protease NS3. Residues 110 to 130 (GSIMWLASLAVVIACAGAMKL) form a helical membrane-spanning segment. The Extracellular portion of the chain corresponds to 131–253 (SNFQGKLLMT…ATRYLMKTEN (123 aa)). The N-linked (GlcNAc...) asparagine; by host glycan is linked to Asn-142. The chain crosses the membrane as a helical span at residues 254–274 (WIIRNPGYAFLAAVLGWMLGS). The Cytoplasmic portion of the chain corresponds to 275 to 279 (NNGQR). Residues 280–294 (VVFTILLLLVAPAYS) form a helical membrane-spanning segment. Topologically, residues 295-746 (FNCLGMGNRD…QVFGGAFRTL (452 aa)) are extracellular. Intrachain disulfides connect Cys-297-Cys-324, Cys-354-Cys-410, Cys-354-Cys-415, Cys-368-Cys-399, Cys-386-Cys-410, and Cys-386-Cys-415. Residues 392–405 (DRGWGNGCGLFGKG) are fusion peptide. A glycan (N-linked (GlcNAc...) asparagine; by host) is linked at Asn-448. Cystine bridges form between Cys-484/Cys-581 and Cys-598/Cys-629. A helical membrane pass occupies residues 747–767 (FGGMSWITQGLMGALLLWMGV). The Cytoplasmic segment spans residues 768–773 (NARDRS). The helical transmembrane segment at 774 to 794 (IALAFLATGGVLVFLATNVHA) threads the bilayer. Residues 795-1219 (DTGCAIDITR…AFAEANSGGD (425 aa)) lie on the Extracellular side of the membrane. Disulfide bonds link Cys-798–Cys-809, Cys-849–Cys-937, Cys-973–Cys-1017, Cys-1074–Cys-1123, Cys-1085–Cys-1106, and Cys-1107–Cys-1110. N-linked (GlcNAc...) asparagine; by host glycans are attached at residues Asn-924 and Asn-1001. A helical transmembrane segment spans residues 1220 to 1240 (VLHLALIAVFKIQPAFLVMNM). Residues 1241-1250 (LSTRWTNQEN) lie on the Cytoplasmic side of the membrane. A helical transmembrane segment spans residues 1251–1271 (VVLVLGAAFFQLASVDLQIGV). His-1272 is a topological domain (lumenal). A helical transmembrane segment spans residues 1273-1293 (GILNAAAIAWMIVRAITFPTT). Topologically, residues 1294-1309 (SSVTMPVLALLTPGMR) are cytoplasmic. The chain crosses the membrane as a helical span at residues 1310–1330 (ALYLDTYRIILLVIGICSLLH). Residues 1331–1341 (ERKKTMAKKKG) lie on the Lumenal side of the membrane. A helical membrane pass occupies residues 1342–1362 (AVLLGLALTSTGWFSPTTIAA). The Cytoplasmic segment spans residues 1363 to 1374 (GLMVCNPNKKRG). Residues 1375-1395 (WPATEFLSAVGLMFAIVGGLA) form a helical membrane-spanning segment. Over 1396–1398 (ELD) the chain is Lumenal. Residues 1399-1419 (IESMSIPFMLAGLMAVSYVVS) traverse the membrane as a helical segment. The Cytoplasmic portion of the chain corresponds to 1420 to 1476 (GKATDMWLERAADISWEMDAAITGSSRRLDVKLDDDGDFHLIDDPGVPWKVWVLRMS). The tract at residues 1427 to 1466 (LERAADISWEMDAAITGSSRRLDVKLDDDGDFHLIDDPGV) is interacts with and activates NS3 protease. The helical intramembrane region spans 1477-1497 (CIGLAALTPWAIVPAAFGYWL). The Cytoplasmic portion of the chain corresponds to 1498 to 2173 (TLKTTKRGGV…RMALEELPDA (676 aa)). In terms of domain architecture, Peptidase S7 spans 1505 to 1682 (GGVFWDTPSP…DRQEEPVPEA (178 aa)). Active-site charge relay system; for serine protease NS3 activity residues include His-1555, Asp-1579, and Ser-1639. Positions 1685-1841 (PNMLRKRQMT…DSNAPIHDLQ (157 aa)) constitute a Helicase ATP-binding domain. The important for RNA-binding stretch occupies residues 1689–1692 (RKRQ). 1698-1705 (LHPGSGKT) is a binding site for ATP. The short motif at 1789-1792 (DEAH) is the DEAH box element. The Helicase C-terminal domain maps to 1852 to 2017 (GYEWITEYAG…GLVAQLYGPE (166 aa)). Lys-1893 is modified (N6-acetyllysine; by host). The segment at 1950 to 1972 (NPSPITSASAAQRRGRVGRNPNQ) is disordered. Residues 2168–2172 (EELPD) are regulates the ATPase activity of NS3 helicase. A helical membrane pass occupies residues 2174–2194 (LETITLIVAITVMTGGFFLLM). The Lumenal segment spans residues 2195 to 2199 (MQRKG). The segment at residues 2200 to 2220 (IGKMGLGALVLTLATFFLWAA) is an intramembrane region (helical). Residue Glu-2221 is a topological domain, lumenal. Residues 2222–2242 (VPGTKIAGTLLIALLLMVVLI) form a helical membrane-spanning segment. The Cytoplasmic portion of the chain corresponds to 2243-2257 (PEPEKQRSQTDNQLA). A helical transmembrane segment spans residues 2258–2278 (VFLICVLTVVGVVAANEYGML). The Lumenal segment spans residues 2279–2311 (EKTKADLKSMFGGKTQASGLTGLPSMALDLRPA). The helical intramembrane region spans 2312-2332 (TAWALYGGSTVVLTPLLKHLI). Residues 2333–2368 (TSEYVTTSLASINSQAGSLFVLPRGVPFTDLDLTVG) are Lumenal-facing. The chain crosses the membrane as a helical span at residues 2369-2389 (LVFLGCWGQITLTTFLTAMVL). At 2390-2444 (ATLHYGYMLPGWQAEALRAAQRRTAAGIMKNAVVDGMVATDVPELERTTPLMQKK) the chain is on the cytoplasmic side. Residues 2445-2465 (VGQVLLIGVSVAAFLVNPNVT) form a helical membrane-spanning segment. Residues 2466–2469 (TVRE) are Lumenal-facing. The chain crosses the membrane as a helical span at residues 2470 to 2490 (AGVLVTAATLTLWDNGASAVW). The Cytoplasmic segment spans residues 2491 to 3432 (NSTTATGLCH…DVLIQEDRVI (942 aa)). Positions 2528–2793 (GRPGGRTLGE…DVNLGSGTRA (266 aa)) constitute an mRNA cap 0-1 NS5-type MT domain. Position 2583 (Ser-2583) interacts with S-adenosyl-L-methionine. Ser-2583 carries the phosphoserine modification. Lys-2588 serves as the catalytic For 2'-O-MTase activity. Residues Gly-2613, Trp-2614, Thr-2631, Lys-2632, Asp-2658, and Val-2659 each coordinate S-adenosyl-L-methionine. Asp-2673 (for 2'-O-MTase activity) is an active-site residue. Ile-2674 serves as a coordination point for S-adenosyl-L-methionine. Catalysis depends on for 2'-O-MTase activity residues Lys-2709 and Glu-2745. Tyr-2747 is a binding site for S-adenosyl-L-methionine. Residues Glu-2967, His-2971, Cys-2976, and Cys-2979 each contribute to the Zn(2+) site. Residues 3057-3209 (GKMYADDTAG…KPLDDRFATA (153 aa)) form the RdRp catalytic domain. Residues His-3244, Cys-3260, and Cys-3379 each contribute to the Zn(2+) site.

This sequence in the N-terminal section; belongs to the class I-like SAM-binding methyltransferase superfamily. mRNA cap 0-1 NS5-type methyltransferase family. As to quaternary structure, homodimer. Interacts (via N-terminus) with host EXOC1 (via C-terminus); this interaction results in EXOC1 degradation through the proteasome degradation pathway. Forms heterodimers with envelope protein E in the endoplasmic reticulum and Golgi. In terms of assembly, homodimer; in the endoplasmic reticulum and Golgi. Interacts with protein prM. Interacts with non-structural protein 1. Interacts with host HSPA5. As to quaternary structure, homodimer; Homohexamer when secreted. Interacts with envelope protein E. NS1 interacts with NS4B. Interacts with host complement protein CFH; this interaction leads to the degradation of C3. Interacts (via N-terminus) with serine protease NS3. In terms of assembly, forms a heterodimer with serine protease NS3. May form homooligomers. As to quaternary structure, forms a heterodimer with NS2B. Interacts with non-structural protein 2A (via N-terminus). Interacts with NS4B. Interacts with unphosphorylated RNA-directed RNA polymerase NS5; this interaction stimulates RNA-directed RNA polymerase NS5 guanylyltransferase activity. Interacts with host ILF2. Interacts with serine protease NS3. In terms of assembly, homodimer. Interacts with host STAT2; this interaction inhibits the phosphorylation of the latter, and, when all viral proteins are present (polyprotein), targets STAT2 for degradation. Interacts with serine protease NS3. Mn(2+) serves as cofactor. The cofactor is Mg(2+). Specific enzymatic cleavages in vivo yield mature proteins. Cleavages in the lumen of endoplasmic reticulum are performed by host signal peptidase, whereas cleavages in the cytoplasmic side are performed by serine protease NS3. Signal cleavage at the 2K-4B site requires a prior NS3 protease-mediated cleavage at the 4A-2K site. In terms of processing, cleaved in post-Golgi vesicles by a host furin, releasing the mature small envelope protein M, and peptide pr. This cleavage is incomplete as up to 30% of viral particles still carry uncleaved prM. Post-translationally, N-glycosylated. N-glycosylated. The excreted form is glycosylated and this is required for efficient secretion of the protein from infected cells. In terms of processing, acetylated by host KAT5. Acetylation modulates NS3 RNA-binding and unwinding activities and plays an important positive role for viral replication. Post-translationally, phosphorylated on serines residues. This phosphorylation may trigger NS5 nuclear localization.

The protein localises to the virion. It is found in the host nucleus. The protein resides in the host cytoplasm. Its subcellular location is the host perinuclear region. It localises to the secreted. The protein localises to the virion membrane. It is found in the host endoplasmic reticulum membrane. The protein resides in the host cell surface. The enzyme catalyses Selective hydrolysis of -Xaa-Xaa-|-Yaa- bonds in which each of the Xaa can be either Arg or Lys and Yaa can be either Ser or Ala.. It carries out the reaction RNA(n) + a ribonucleoside 5'-triphosphate = RNA(n+1) + diphosphate. It catalyses the reaction a ribonucleoside 5'-triphosphate + H2O = a ribonucleoside 5'-diphosphate + phosphate + H(+). The catalysed reaction is ATP + H2O = ADP + phosphate + H(+). The enzyme catalyses a 5'-end (5'-triphosphoguanosine)-ribonucleoside in mRNA + S-adenosyl-L-methionine = a 5'-end (N(7)-methyl 5'-triphosphoguanosine)-ribonucleoside in mRNA + S-adenosyl-L-homocysteine. It carries out the reaction a 5'-end (N(7)-methyl 5'-triphosphoguanosine)-ribonucleoside in mRNA + S-adenosyl-L-methionine = a 5'-end (N(7)-methyl 5'-triphosphoguanosine)-(2'-O-methyl-ribonucleoside) in mRNA + S-adenosyl-L-homocysteine + H(+). Functionally, plays a role in virus budding by binding to the cell membrane and gathering the viral RNA into a nucleocapsid that forms the core of a mature virus particle. During virus entry, may induce genome penetration into the host cytoplasm after hemifusion induced by the surface proteins. Can migrate to the cell nucleus where it modulates host functions. Overcomes the anti-viral effects of host EXOC1 by sequestering and degrading the latter through the proteasome degradation pathway. In terms of biological role, inhibits RNA silencing by interfering with host Dicer. Prevents premature fusion activity of envelope proteins in trans-Golgi by binding to envelope protein E at pH6.0. After virion release in extracellular space, gets dissociated from E dimers. Its function is as follows. Acts as a chaperone for envelope protein E during intracellular virion assembly by masking and inactivating envelope protein E fusion peptide. prM is the only viral peptide matured by host furin in the trans-Golgi network probably to avoid catastrophic activation of the viral fusion activity in acidic Golgi compartment prior to virion release. prM-E cleavage is inefficient, and many virions are only partially matured. These uncleaved prM would play a role in immune evasion. Functionally, may play a role in virus budding. Exerts cytotoxic effects by activating a mitochondrial apoptotic pathway through M ectodomain. May display a viroporin activity. In terms of biological role, binds to host cell surface receptor and mediates fusion between viral and cellular membranes. Efficient virus attachment to cell is, at least in part, mediated by host HSPA5. Envelope protein is synthesized in the endoplasmic reticulum in the form of heterodimer with protein prM. They play a role in virion budding in the ER, and the newly formed immature particle is covered with 60 spikes composed of heterodimer between precursor prM and envelope protein E. The virion is transported to the Golgi apparatus where the low pH causes dissociation of PrM-E heterodimers and formation of E homodimers. prM-E cleavage is inefficient, and many virions are only partially matured. These uncleaved prM would play a role in immune evasion. Involved in immune evasion, pathogenesis and viral replication. Once cleaved off the polyprotein, is targeted to three destinations: the viral replication cycle, the plasma membrane and the extracellular compartment. Essential for viral replication. Required for formation of the replication complex and recruitment of other non-structural proteins to the ER-derived membrane structures. Excreted as a hexameric lipoparticle that plays a role against host immune response. Antagonizing the complement function. Binds to the host macrophages and dendritic cells. Inhibits signal transduction originating from Toll-like receptor 3 (TLR3). Its function is as follows. Component of the viral RNA replication complex that functions in virion assembly and antagonizes the host alpha/beta interferon antiviral response. Functionally, required cofactor for the serine protease function of NS3. May have membrane-destabilizing activity and form viroporins. In terms of biological role, displays three enzymatic activities: serine protease, NTPase and RNA helicase. NS3 serine protease, in association with NS2B, performs its autocleavage and cleaves the polyprotein at dibasic sites in the cytoplasm: C-prM, NS2A-NS2B, NS2B-NS3, NS3-NS4A, NS4A-2K and NS4B-NS5. NS3 RNA helicase binds RNA and unwinds dsRNA in the 3' to 5' direction. Regulates the ATPase activity of the NS3 helicase activity. NS4A allows NS3 helicase to conserve energy during unwinding. Its function is as follows. Functions as a signal peptide for NS4B and is required for the interferon antagonism activity of the latter. Functionally, induces the formation of ER-derived membrane vesicles where the viral replication takes place. Inhibits interferon (IFN)-induced host STAT1 phosphorylation and nuclear translocation, thereby preventing the establishment of cellular antiviral state by blocking the IFN-alpha/beta pathway. Inhibits STAT2 translocation in the nucleus after IFN-alpha treatment. In terms of biological role, replicates the viral (+) and (-) RNA genome. Performs the capping of genomes in the cytoplasm. NS5 methylates viral RNA cap at guanine N-7 and ribose 2'-O positions. Besides its role in RNA genome replication, also prevents the establishment of cellular antiviral state by blocking the interferon-alpha/beta (IFN-alpha/beta) signaling pathway. Inhibits host TYK2 and STAT2 phosphorylation, thereby preventing activation of JAK-STAT signaling pathway. The polypeptide is Genome polyprotein (Ardeidae (herons)).